A 701-amino-acid chain; its full sequence is MATSHLTSRSLLVQAQYPISRLPSNLRLSLSHHKQPAAVAKRRRAPAPSHPAFSSVIRGRPKKVPIPENGEPAAGVRVTERGLAYHLDGAPFEFQYSYTETPRARPVALREAPFLPFGPEVTPRPWTGRKPLPKSRKELPEFDSFMLPPPGKKGVKPVQSPGPFLAGTEPRYQAASREEVLGEPLTKEEVDELVKATLKTKRQLNIGRDGLTHNMLENIHSHWKRKRVCKIKCKGVCTVDMDNVCQQLEEKVGGKVIHHQGGVIFLFRGRNYNYRTRPIYPLMLWKPAAPVYPRLVKKIPDGLTPDEAEDMRKRGRQLPPICKLGKNGVYLNLVKQVREAFEACDLVRVDCSGLNKSDCRKIGAKLKDLVPCTLLSFEFEHILMWRGNDWKSSLPPLEENDFKVASDQILNSKEAGSGSALTPIELVNNATSLKKCNLIEGAEKLEDSMKSSFENGMILGSACGNPGVCNSEGIDGTESSADAPIEFSPSNSARDLDPSQTSTLYCQSSLLDKSENGELIEMYPDRCGNSEQSPDVPEALTCLMGSSDEIHELETMRRNCKHLNGSDGVNSDSIVPSYMEGILLLFKQAIDSGMALVLNENEFADANYVYQKSVAFTKTAPRYLVLRHTPRKSHGTQKTEPAKNVRINKHLEEHKVSDHVKKKEIVMGGSRMQRNDHAREFLSDVVPQGTLRVDELAKLLA.

A chloroplast-targeting transit peptide spans 1–77 (MATSHLTSRS…ENGEPAAGVR (77 aa)). 2 consecutive CRM domains span residues 183-279 (EPLT…TRPI) and 301-397 (DGLT…LPPL). Residues 581–603 (GILLLFKQAIDSGMALVLNENEF) form a CRS2 binding region.

As to quaternary structure, interacts with CRS2 and RNA. Part of large ribonucleo-protein complexes that include group IIB introns, CRS2 and CAF1.

Its subcellular location is the plastid. It is found in the chloroplast stroma. In terms of biological role, required for the splicing of group IIB introns in chloroplasts. Forms splicing particles with CRS2. Interacts with RNA and confers intron specificity of the splicing particles. This is CRS2-associated factor 1, chloroplastic from Oryza sativa subsp. japonica (Rice).